The following is an 858-amino-acid chain: Cone cGMP-specific 3',5'-cyclic phosphodiesterase subunit alpha' (858 aa).

2 consecutive GAF domains span residues 75 to 224 (TPEQ…SIIL) and 256 to 433 (DVER…GWSL). 3',5'-cyclic GMP is bound by residues Ser-97, Asp-116, 169–172 (DKQT), and Thr-176. The region spanning 486 to 819 (EEKQLVAILK…VEWKSLADEY (334 aa)) is the PDEase domain. His-562 serves as the catalytic Proton donor. The a divalent metal cation site is built by His-566, His-602, Asp-603, and Asp-723. Basic and acidic residues predominate over residues 830 to 852 (AKKQEGGAEKAAEDSGGGDDKKS). The interval 830–858 (AKKQEGGAEKAAEDSGGGDDKKSKTCLML) is disordered. Cys-855 bears the Cysteine methyl ester mark. Residue Cys-855 is the site of S-geranylgeranyl cysteine attachment. A propeptide spans 856–858 (LML) (removed in mature form).

It belongs to the cyclic nucleotide phosphodiesterase family. In terms of assembly, composed of two alpha' subunits that are associated with 3 smaller proteins of 11, 13, and 15 kDa. A divalent metal cation serves as cofactor.

The protein localises to the cell membrane. The enzyme catalyses 3',5'-cyclic GMP + H2O = GMP + H(+). Its function is as follows. As cone-specific cGMP phosphodiesterase, it plays an essential role in light detection and cone phototransduction by rapidly decreasing intracellular levels of cGMP. This is Cone cGMP-specific 3',5'-cyclic phosphodiesterase subunit alpha' (PDE6C) from Homo sapiens (Human).